Reading from the N-terminus, the 311-residue chain is Porphobilinogen deaminase (311 aa).

C242 carries the S-(dipyrrolylmethanemethyl)cysteine modification.

Belongs to the HMBS family. As to quaternary structure, monomer. The cofactor is dipyrromethane.

It catalyses the reaction 4 porphobilinogen + H2O = hydroxymethylbilane + 4 NH4(+). The protein operates within porphyrin-containing compound metabolism; protoporphyrin-IX biosynthesis; coproporphyrinogen-III from 5-aminolevulinate: step 2/4. Tetrapolymerization of the monopyrrole PBG into the hydroxymethylbilane pre-uroporphyrinogen in several discrete steps. The protein is Porphobilinogen deaminase (hemC) of Neisseria meningitidis serogroup A / serotype 4A (strain DSM 15465 / Z2491).